A 650-amino-acid chain; its full sequence is Sterol O-acyltransferase 2 (650 aa).

The interval 41-79 is disordered; it reads LTSSNNSCASEHEGEGEGEDERPATTSSAPTQNHSAGDV. Polar residues predominate over residues 64 to 75; the sequence is ATTSSAPTQNHS. A run of 5 helical transmembrane segments spans residues 223–243, 300–320, 412–432, 450–470, and 493–513; these read FSGLYVAFWMAIAFGAVKALI, TGWAFTSIYELLFVGFYMYLT, INVSNFFMFTMFPTLIYQIEY, IFGTIFLMMIDAQILMHPVAM, and LLVDIVPGFIVMYILDFYLIW. The FYXDWWN motif motif lies at 531 to 537; the sequence is FYGDWWN. The next 2 helical transmembrane spans lie at 575–595 and 630–650; these read ATLMTFFLSSVVHELAMYVIF and VIFWLGICMGPSVMCTLYLTF. His-587 is a catalytic residue.

Belongs to the membrane-bound acyltransferase family. Sterol o-acyltransferase subfamily.

It is found in the endoplasmic reticulum membrane. Its function is as follows. Sterol O-acyltransferase that catalyzes the formation of stery esters. The sequence is that of Sterol O-acyltransferase 2 (ARE2) from Saccharomyces uvarum (strain ATCC 76518 / CBS 7001 / CLIB 283 / NBRC 10550 / MCYC 623 / NCYC 2669 / NRRL Y-11845) (Yeast).